Reading from the N-terminus, the 401-residue chain is Anhydro-N-acetylmuramic acid kinase (401 aa).

An ATP-binding site is contributed by 25–32 (GTSLDGLD).

Belongs to the anhydro-N-acetylmuramic acid kinase family.

The catalysed reaction is 1,6-anhydro-N-acetyl-beta-muramate + ATP + H2O = N-acetyl-D-muramate 6-phosphate + ADP + H(+). It functions in the pathway amino-sugar metabolism; 1,6-anhydro-N-acetylmuramate degradation. The protein operates within cell wall biogenesis; peptidoglycan recycling. Catalyzes the specific phosphorylation of 1,6-anhydro-N-acetylmuramic acid (anhMurNAc) with the simultaneous cleavage of the 1,6-anhydro ring, generating MurNAc-6-P. Is required for the utilization of anhMurNAc either imported from the medium or derived from its own cell wall murein, and thus plays a role in cell wall recycling. The chain is Anhydro-N-acetylmuramic acid kinase from Pseudoalteromonas atlantica (strain T6c / ATCC BAA-1087).